We begin with the raw amino-acid sequence, 494 residues long: Putative transporter SVOPL (494 aa).

Transmembrane regions (helical) follow at residues 48 to 68 (IALF…IMLI), 86 to 106 (VAFV…LFGL), 121 to 141 (FLWG…IWFV), 179 to 199 (VFWL…IPTI), 203 to 223 (WLIR…KFIP), 281 to 301 (TLQI…VILA), 350 to 370 (IIST…INFL), 385 to 405 (LFFL…FLFM), 431 to 451 (AIGM…APFI), and 460 to 480 (FLGA…SAFT).

This sequence belongs to the major facilitator superfamily.

It is found in the membrane. The chain is Putative transporter SVOPL (Svopl) from Mus musculus (Mouse).